Here is an 85-residue protein sequence, read N- to C-terminus: uncharacterized protein (85 aa).

3 helical membrane-spanning segments follow: residues 4-24 (LTLCWLALLALAVTGVLLGGA), 27-47 (SPWLLAAVLACAVAKGWLIGE), and 61-81 (RLLLAWPLLMALAVGAALYLA).

It is found in the cell membrane. This is an uncharacterized protein from Pseudomonas aeruginosa (strain ATCC 15692 / DSM 22644 / CIP 104116 / JCM 14847 / LMG 12228 / 1C / PRS 101 / PAO1).